Consider the following 64-residue polypeptide: Large ribosomal subunit protein bL32 (64 aa).

Belongs to the bacterial ribosomal protein bL32 family.

The polypeptide is Large ribosomal subunit protein bL32 (Bifidobacterium longum (strain DJO10A)).